The sequence spans 319 residues: Aspartate carbamoyltransferase catalytic subunit (319 aa).

2 residues coordinate carbamoyl phosphate: Arg-65 and Thr-66. L-aspartate is bound at residue Lys-93. Carbamoyl phosphate contacts are provided by Arg-115, His-149, and Gln-152. L-aspartate-binding residues include Arg-182 and Arg-237. Carbamoyl phosphate-binding residues include Gly-278 and Pro-279.

Belongs to the aspartate/ornithine carbamoyltransferase superfamily. ATCase family. Heterododecamer (2C3:3R2) of six catalytic PyrB chains organized as two trimers (C3), and six regulatory PyrI chains organized as three dimers (R2).

The enzyme catalyses carbamoyl phosphate + L-aspartate = N-carbamoyl-L-aspartate + phosphate + H(+). Its pathway is pyrimidine metabolism; UMP biosynthesis via de novo pathway; (S)-dihydroorotate from bicarbonate: step 2/3. Functionally, catalyzes the condensation of carbamoyl phosphate and aspartate to form carbamoyl aspartate and inorganic phosphate, the committed step in the de novo pyrimidine nucleotide biosynthesis pathway. The sequence is that of Aspartate carbamoyltransferase catalytic subunit from Janthinobacterium sp. (strain Marseille) (Minibacterium massiliensis).